We begin with the raw amino-acid sequence, 170 residues long: Archaemetzincin (170 aa).

Residue His-110 participates in Zn(2+) binding. The Proton acceptor role is filled by Glu-111. Zn(2+) is bound by residues His-114, His-120, Cys-121, Cys-125, Cys-144, and Cys-147.

It belongs to the peptidase M54 family. As to quaternary structure, monomer. Zn(2+) serves as cofactor.

In terms of biological role, probable zinc metalloprotease whose natural substrate is unknown. The polypeptide is Archaemetzincin (Nanoarchaeum equitans (strain Kin4-M)).